The chain runs to 387 residues: tRNA pseudouridine synthase B (387 aa).

D43 serves as the catalytic Nucleophile.

It belongs to the pseudouridine synthase TruB family. Type 1 subfamily.

The catalysed reaction is uridine(55) in tRNA = pseudouridine(55) in tRNA. Its function is as follows. Responsible for synthesis of pseudouridine from uracil-55 in the psi GC loop of transfer RNAs. The sequence is that of tRNA pseudouridine synthase B from Bifidobacterium longum (strain DJO10A).